The primary structure comprises 277 residues: Protein OPG166 (277 aa).

Residues Asn-29 and Asn-58 are each glycosylated (N-linked (GlcNAc...) asparagine; by host). The next 5 helical transmembrane spans lie at 124–144, 156–176, 186–206, 219–239, and 247–267; these read TMLMFIFTGITLFLLFLEIAY, GILQVFGCIIAMIELCGAFLF, IIGLLMMTLPSIFLIITKVFS, LIIYYQLAGYILTVLGLGLSL, and LLLSGLGTIMVSEHFSLLFLV.

Belongs to the orthopoxvirus OPG166 protein family.

The protein resides in the host membrane. Its function is as follows. Promotes, when overexpressed, the influx of extracellular Ca(2+), leading to membrane permeability and host cell necrosis. The sequence is that of Protein OPG166 (OPG166) from Variola virus (isolate Human/India/Ind3/1967) (VARV).